The sequence spans 303 residues: Recombination-associated protein RdgC (303 aa).

Belongs to the RdgC family.

Its subcellular location is the cytoplasm. It is found in the nucleoid. May be involved in recombination. The sequence is that of Recombination-associated protein RdgC from Shewanella sediminis (strain HAW-EB3).